The following is a 509-amino-acid chain: MEGNARGGGHSEALKNYNLGRTLGIGSFGKVKIAEHKLTGHRVAIKILNRRQMRNMEMEEKAKREIKILRLFIHPHIIRLYEVIYTPTDIYVVMEYCKFGELFDYIVEKGRLQEDEARRIFQQIISGVEYCHRNMVVHRDLKPENLLLDSKYNVKLADFGLSNVMHDGHFLKTSCGSPNYAAPEVISGKLYAGPEVDVWSCGVILYALLCGTLPFDDENIPNLFKKIKGGIYTLPSHLSALARDLIPRMLVVDPMKRITIREIREHQWFQIRLPRYLAVPPPDTAQQAKMIDEDTLQDVVNLGYEKDHVCESLRNRLQNEATVAYYLLLDNRFRATSGYLGADYQESLERNLNRFASSESASSNTRHYLPGSSDPHASGLRPHYPVERKWALGLQSRAQPREIMIEVLKALEDLNVCWKKNGQYNMKCRWSVGYPQATDMLDVNHSFVDDSIIMDNGDVNGRLPAVIKFEIQLYKSRDEKYLLDMQRVTGPQLLFLDFCAAFLTKLRVL.

The Protein kinase domain occupies 17 to 269 (YNLGRTLGIG…IREIREHQWF (253 aa)). ATP-binding positions include 23–31 (LGIGSFGKV) and Lys46. The Proton acceptor role is filled by Asp140. Residues 290–330 (MIDEDTLQDVVNLGYEKDHVCESLRNRLQNEATVAYYLLLD) enclose the UBA domain. A KA1 domain is found at 460–508 (NGRLPAVIKFEIQLYKSRDEKYLLDMQRVTGPQLLFLDFCAAFLTKLRV).

The protein belongs to the protein kinase superfamily. Ser/Thr protein kinase family. As to quaternary structure, interacts with HDR1. Strongly expressed in immature seeds. Mostly expressed in panicles, leaf sheaths and roots, and to a lower extent, in germinating seeds and leaf blades.

The protein resides in the nucleus. It catalyses the reaction L-seryl-[protein] + ATP = O-phospho-L-seryl-[protein] + ADP + H(+). It carries out the reaction L-threonyl-[protein] + ATP = O-phospho-L-threonyl-[protein] + ADP + H(+). In terms of biological role, suppressor of flowering in long days (LD) via the that up-regulation of HD1 and the down-regulation of EHD1. Can phosphorylate HD1 in the presence of HDR1. This chain is Serine/threonine protein kinase OSK4, found in Oryza sativa subsp. indica (Rice).